Consider the following 2410-residue polypeptide: Genome polyprotein 1 (2410 aa).

Residues 1 to 21 are disordered; sequence MEQTLAQAVSRRNKTDTPMAE. Residues 474 to 632 form the Helicase ATP-binding domain; it reads AMADANNCWS…AARKYPLHVE (159 aa). Residue 487-494 coordinates ATP; sequence GHTGSGKS. The short motif at 583–586 is the DEAH box element; it reads DEAH. The Helicase C-terminal domain maps to 647–813; that stretch reads GGGDLLDISK…NVPFYMNETF (167 aa). The residue at position 1234 (Y1234) is an O-(5'-phospho-RNA)-tyrosine. Positions 1359–1573 constitute a Peptidase C4 domain; that stretch reads ITLEASTGIL…CGYASHTALF (215 aa). Active-site for nuclear inclusion protein A activity residues include H1404, D1440, and C1507. The 124-residue stretch at 1857 to 1980 folds into the RdRp catalytic domain; sequence WLHGSGDGSR…AISPQFDEEF (124 aa). Residues 2175 to 2200 form a disordered region; the sequence is MPTEDDGKLKTPSGARIPSSAADGNW.

It belongs to the bymoviruses polyprotein 1 family. Post-translationally, VPg is uridylylated by the polymerase and is covalently attached to the 5'-end of the genomic RNA. This uridylylated form acts as a nucleotide-peptide primer for the polymerase. The viral RNA1 of bymoviruses is expressed as a single polyprotein which undergoes post-translational proteolytic processing by the main proteinase NIa-pro resulting in the production of at least eight individual proteins.

It localises to the host cytoplasmic vesicle. The protein resides in the virion. The enzyme catalyses RNA(n) + a ribonucleoside 5'-triphosphate = RNA(n+1) + diphosphate. It carries out the reaction Hydrolyzes glutaminyl bonds, and activity is further restricted by preferences for the amino acids in P6 - P1' that vary with the species of potyvirus, e.g. Glu-Xaa-Xaa-Tyr-Xaa-Gln-|-(Ser or Gly) for the enzyme from tobacco etch virus. The natural substrate is the viral polyprotein, but other proteins and oligopeptides containing the appropriate consensus sequence are also cleaved.. Indispensable for virus replication. Its function is as follows. Mediates the cap-independent, EIF4E-dependent translation of viral genomic RNAs. Binds to the cap-binding site of host EIF4E and thus interferes with the host EIF4E-dependent mRNA export and translation. VPg-RNA directly binds EIF4E and is a template for transcription. Also forms trimeric complexes with EIF4E-EIF4G, which are templates for translation. In terms of biological role, has RNA-binding and proteolytic activities. Functionally, an RNA-dependent RNA polymerase that plays an essential role in the virus replication. This chain is Genome polyprotein 1, found in Hordeum vulgare (Barley).